A 307-amino-acid chain; its full sequence is Zygote arrest protein 2.L (307 aa).

The disordered stretch occupies residues 138-200 (LPQGGRLPKK…EEPGNEEQTK (63 aa)). Over residues 156–186 (LKERAPSPEDKEREKVSEKEPDTKDELEKRP) the composition is skewed to basic and acidic residues. Residues 208-293 (QKYGYFHCKD…QELCGRCKNK (86 aa)) form a 3CxxC-type zinc finger.

It belongs to the ZAR1 family. In terms of tissue distribution, expressed in oocytes.

Its subcellular location is the cytoplasm. It is found in the cytoplasmic ribonucleoprotein granule. MRNA-binding protein required for maternal mRNA storage, translation and degradation during oocyte maturation. Probably promotes formation of some phase-separated membraneless compartment that stores maternal mRNAs in oocytes: acts by undergoing liquid-liquid phase separation upon binding to maternal mRNAs. Binds to the 3'-UTR of maternal mRNAs, inhibiting their translation. The polypeptide is Zygote arrest protein 2.L (zar2.L) (Xenopus laevis (African clawed frog)).